Consider the following 152-residue polypeptide: SsrA-binding protein (152 aa).

The protein belongs to the SmpB family.

Its subcellular location is the cytoplasm. Required for rescue of stalled ribosomes mediated by trans-translation. Binds to transfer-messenger RNA (tmRNA), required for stable association of tmRNA with ribosomes. tmRNA and SmpB together mimic tRNA shape, replacing the anticodon stem-loop with SmpB. tmRNA is encoded by the ssrA gene; the 2 termini fold to resemble tRNA(Ala) and it encodes a 'tag peptide', a short internal open reading frame. During trans-translation Ala-aminoacylated tmRNA acts like a tRNA, entering the A-site of stalled ribosomes, displacing the stalled mRNA. The ribosome then switches to translate the ORF on the tmRNA; the nascent peptide is terminated with the 'tag peptide' encoded by the tmRNA and targeted for degradation. The ribosome is freed to recommence translation, which seems to be the essential function of trans-translation. The chain is SsrA-binding protein from Rickettsia felis (strain ATCC VR-1525 / URRWXCal2) (Rickettsia azadi).